Reading from the N-terminus, the 100-residue chain is Urease subunit gamma (100 aa).

The protein belongs to the urease gamma subunit family. In terms of assembly, heterotrimer of UreA (gamma), UreB (beta) and UreC (alpha) subunits. Three heterotrimers associate to form the active enzyme.

It is found in the cytoplasm. It carries out the reaction urea + 2 H2O + H(+) = hydrogencarbonate + 2 NH4(+). Its pathway is nitrogen metabolism; urea degradation; CO(2) and NH(3) from urea (urease route): step 1/1. This chain is Urease subunit gamma, found in Aliivibrio fischeri (strain ATCC 700601 / ES114) (Vibrio fischeri).